The primary structure comprises 325 residues: Solute-binding protein RD1_1052 (325 aa).

The first 26 residues, 1 to 26, serve as a signal peptide directing secretion; it reads MRLFTKIKGLAAVTCVAALASSAAFA. D-mannonate is bound by residues E75, 93 to 95, 148 to 151, R171, and N211; these read GES and RGPR. Residues E75, 93-95, 148-151, R171, and N211 contribute to the L-galactonate site; these read GES and RGPR.

The protein belongs to the bacterial solute-binding protein 7 family. In terms of assembly, the complex is comprised of an extracytoplasmic solute-binding protein and a heteromeric permease formed by two transmembrane proteins.

Its subcellular location is the periplasm. Functionally, solute-binding protein that binds L-galactonate and D-mannonate (in vitro). Probably part of a tripartite ATP-independent periplasmic (TRAP) transport system that mediates solute transport into the cytoplasm. The chain is Solute-binding protein RD1_1052 from Roseobacter denitrificans (strain ATCC 33942 / OCh 114) (Erythrobacter sp. (strain OCh 114)).